The sequence spans 570 residues: Frizzled-2 (570 aa).

The first 28 residues, 1 to 28 (MRARSALPRSALPRLLLPLLLLPAAGPA), serve as a signal peptide directing secretion. At 29 to 252 (QFHGEKGISI…QEETRFARLW (224 aa)) the chain is on the extracellular side. The region spanning 39–158 (PDHGFCQPIS…HGAEQICVGQ (120 aa)) is the FZ domain. 5 disulfide bridges follow: C44–C105, C52–C98, C89–C126, C115–C155, and C119–C143. A glycan (N-linked (GlcNAc...) asparagine) is linked at N58. N159 carries N-linked (GlcNAc...) asparagine glycosylation. The disordered stretch occupies residues 166 to 194 (PALLTTAPPSGLQPGAGGTPGGPGGGGSP). Gly residues predominate over residues 179 to 193 (PGAGGTPGGPGGGGS). The chain crosses the membrane as a helical span at residues 253-273 (ILTWSVLCCASTFFTVTTYLV). The Cytoplasmic segment spans residues 274 to 284 (DMQRFRYPERP). The helical transmembrane segment at 285-305 (IIFLSGCYTMVSVAYIAGFVL) threads the bilayer. Residues 306 to 332 (QERVVCNERFSEDGYRTVVQGTKKEGC) lie on the Extracellular side of the membrane. Residues 333–353 (TILFMMLYFFSMASSIWWVIL) form a helical membrane-spanning segment. Topologically, residues 354-375 (SLTWFLAAGMKWGHEAIEANSQ) are cytoplasmic. The chain crosses the membrane as a helical span at residues 376–396 (YFHLAAWAVPAVKTITILAMG). Over 397-419 (QIDGDLLSGVCFVGLNSLDPLRG) the chain is Extracellular. The helical transmembrane segment at 420-440 (FVLAPLFVYLFIGTSFLLAGF) threads the bilayer. Over 441–466 (VSLFRIRTIMKHDGTKTEKLERLMVR) the chain is Cytoplasmic. Residues 467-487 (IGVFSVLYTVPATIVIACYFY) traverse the membrane as a helical segment. Residues 488–524 (EQAFREHWERSWVSQHCKSLAIPCPAHYTPRMSPDFT) lie on the Extracellular side of the membrane. The chain crosses the membrane as a helical span at residues 525 to 545 (VYMIKYLMTLIVGITSGFWIW). The Cytoplasmic segment spans residues 546-570 (SGKTLHSWRKFYTRLTNSRHGETTV). The short motif at 548–553 (KTLHSW) is the Lys-Thr-X-X-X-Trp motif, mediates interaction with the PDZ domain of Dvl family members element. Positions 568–570 (TTV) match the PDZ-binding motif.

It belongs to the G-protein coupled receptor Fz/Smo family. Ubiquitinated by ZNRF3, leading to its degradation by the proteasome. Expressed in embryonic and adult heart, lung, chondrocytes and brain. Also expressed in the developing gastrointestinal tract (strongest in foregut), much weaker expression in the adult. No expression in fetal liver and adult spleen. Up-regulated in esophageal squamous cell carcinomas.

The protein localises to the membrane. It localises to the cell membrane. Functionally, receptor for Wnt proteins. Most of frizzled receptors are coupled to the beta-catenin canonical signaling pathway, which leads to the activation of disheveled proteins, inhibition of GSK-3 kinase, nuclear accumulation of beta-catenin and activation of Wnt target genes. A second signaling pathway involving PKC and calcium fluxes has been seen for some family members, but it is not yet clear if it represents a distinct pathway or if it can be integrated in the canonical pathway, as PKC seems to be required for Wnt-mediated inactivation of GSK-3 kinase. Both pathways seem to involve interactions with G-proteins. May be involved in transduction and intercellular transmission of polarity information during tissue morphogenesis and/or in differentiated tissues. In Mus musculus (Mouse), this protein is Frizzled-2 (Fzd2).